A 226-amino-acid chain; its full sequence is Protein YAE1 homolog (226 aa).

Positions 45–85 are deca-GX3 motif; required for interaction with LTO1; that stretch reads GYRDGIDAGKAVTLQQGFNQGYKKGAEVILNYGRLRGTLSA.

In terms of assembly, forms a complex with LTO1.

It is found in the cytoplasm. The protein localises to the nucleus. Functionally, the complex LTO1:YAE1 functions as a target specific adapter that probably recruits apo-ABCE1 to the cytosolic iron-sulfur protein assembly (CIA) complex machinery. May be required for biogenesis of the large ribosomal subunit and initiation of translation. The protein is Protein YAE1 homolog of Homo sapiens (Human).